The primary structure comprises 222 residues: UPF0758 protein Cag_1513 (222 aa).

The 123-residue stretch at 100–222 (KIMAAGDVFE…WYSFRERGLL (123 aa)) folds into the MPN domain. Zn(2+) contacts are provided by His-171, His-173, and Asp-184. The JAMM motif motif lies at 171–184 (HNHPSGDVNPSNAD).

This sequence belongs to the UPF0758 family.

This is UPF0758 protein Cag_1513 from Chlorobium chlorochromatii (strain CaD3).